A 247-amino-acid chain; its full sequence is MRLIQNMCTITEYPPGTHTECASSSAGTASSRVIKIAVVGGSGVGKTALVVRFLTKRFIGDYERNAGNLYSRQVQIDGMNLAIQVQDTPGVQINDQNLDSNEQLNKSLRWADAVVIVFSITDCKSFDLISRLHQHARQLHPDNRIPIVIVANKADLLHLKQVEPQHGLQLANMLGCTFYEVSVSENYIDVYNAFQVLCKEISKQQNTGTPERRKNSLIPRPKSPNMQDLKRRFKQALSAKVRTATSV.

The segment at 29-247 (ASSRVIKIAV…SAKVRTATSV (219 aa)) is small GTPase-like. Residues 40–47 (GGSGVGKT), 87–91 (DTPGV), and 152–155 (NKAD) contribute to the GTP site. The interval 205 to 228 (QNTGTPERRKNSLIPRPKSPNMQD) is disordered.

The protein belongs to the small GTPase superfamily. Ras family.

It catalyses the reaction GTP + H2O = GDP + phosphate + H(+). In Xenopus tropicalis (Western clawed frog), this protein is Ras-like protein family member 11B.